The chain runs to 673 residues: Cell division cycle protein 23 homolog (673 aa).

10 TPR repeats span residues 86-120, 159-195, 232-267, 332-365, 400-433, 434-467, 469-501, 502-535, 539-572, and 577-610; these read AEMW…VLDN, NKEF…YQEH, EDVW…EPRI, PMII…DPYR, WETC…NPGL, AALW…DPAD, RGWY…KPHD, SRLL…GDVE, LWSL…VTSA, and IYAI…ETLC. The interval 628 to 673 is disordered; that stretch reads SRLPVEEAPGPSNASAAGGQEAMDTEEAPQEGGEEEMSEGEDDFSF. The segment covering 635 to 646 has biased composition (low complexity); it reads APGPSNASAAGG. Residues 650 to 673 show a composition bias toward acidic residues; the sequence is MDTEEAPQEGGEEEMSEGEDDFSF.

This sequence belongs to the APC8/CDC23 family. The APC/C complex is probably composed of at least 12 subunits: apc-2, apc-10, apc-11, cdc-26, emb-1, emb-27, emb-30, mat-1, mat-2, mat-3, such-1 and gfi-3.

The protein operates within protein modification; protein ubiquitination. Functionally, probable component of the anaphase promoting complex/cyclosome (APC/C), a cell cycle-regulated E3 ubiquitin ligase that controls progression through mitosis and the G1 phase of the cell cycle. The APC/C complex acts by mediating ubiquitination and subsequent degradation of target proteins. Developmental role in early embryogenesis and the metaphase to anaphase transition in oocyte and spermatocyte meiosis and mitosis in germ cells. Required for embryonic anterior-posterior axis formation. Plays a role in regulating the abundance of glr-1 receptors in postmitotic neurons, which may in turn control animal locomotion. Involved in regulating GABA neurotransmitter release at neuromuscular junctions in GABA motor neurons. The protein is Cell division cycle protein 23 homolog of Caenorhabditis elegans.